The primary structure comprises 66 residues: Cytochrome c oxidase polypeptide VIII, mitochondrial (66 aa).

The transit peptide at 1 to 17 (MLRYSLQARSALRGVRF) directs the protein to the mitochondrion. Residues 18–38 (SSSHSAPKPGSTIPFYINKKP) lie on the Mitochondrial matrix side of the membrane. A helical transmembrane segment spans residues 39-59 (LPTLLYFGTFGVIFSIPFIVV). Residues 60 to 66 (KYHNRNL) lie on the Mitochondrial intermembrane side of the membrane.

This sequence belongs to the cytochrome c oxidase VIIc family. As to quaternary structure, component of the cytochrome c oxidase (complex IV, CIV), a multisubunit enzyme composed of a catalytic core of 3 subunits and several supernumerary subunits. The complex exists as a monomer or a dimer and forms supercomplexes (SCs) in the inner mitochondrial membrane with ubiquinol-cytochrome c oxidoreductase (cytochrome b-c1 complex, complex III, CIII).

The protein localises to the mitochondrion inner membrane. The protein operates within energy metabolism; oxidative phosphorylation. Its function is as follows. Component of the cytochrome c oxidase, the last enzyme in the mitochondrial electron transport chain which drives oxidative phosphorylation. The respiratory chain contains 3 multisubunit complexes succinate dehydrogenase (complex II, CII), ubiquinol-cytochrome c oxidoreductase (cytochrome b-c1 complex, complex III, CIII) and cytochrome c oxidase (complex IV, CIV), that cooperate to transfer electrons derived from NADH and succinate to molecular oxygen, creating an electrochemical gradient over the inner membrane that drives transmembrane transport and the ATP synthase. Cytochrome c oxidase is the component of the respiratory chain that catalyzes the reduction of oxygen to water. Electrons originating from reduced cytochrome c in the intermembrane space (IMS) are transferred via the dinuclear copper A center (CU(A)) of subunit 2 and heme A of subunit 1 to the active site in subunit 1, a binuclear center (BNC) formed by heme A3 and copper B (CU(B)). The BNC reduces molecular oxygen to 2 water molecules using 4 electrons from cytochrome c in the IMS and 4 protons from the mitochondrial matrix. The protein is Cytochrome c oxidase polypeptide VIII, mitochondrial (cox8) of Schizosaccharomyces pombe (strain 972 / ATCC 24843) (Fission yeast).